The primary structure comprises 707 residues: MVKLSSIIKARKANALAKKNDKIKKKDTDKGIRQKHSKKEGKDETLKRDVEKFIQNVNSEDTPSEDDSMSMDAFLEGGFEELDSANSNDAGSSRKRKNLPNENTQDSTSESSEEEEDGLESYQKQLEGLKEKDPEFYKFLEQNDQDLLEFNAAETDAMAKEIDENERLKSSSGKIVLTSDTIQQWQKLLETNHSLTTLQKVVQAFKAAAFLNEEEAEDLKYTISDSKVFNDLLLLAIQYVPKVLNYHVPIQEDAKGKKFINTDSKVLPKLRPVLKSYGFSILRLLEGMTDAKNISLLLREAQNVLPYMITYRKFLKQFTQATVEVWSSTRDDSVRFSAVVLLRTLCLTADITLLEFVLKEVYLGMARQSAYTTVHTLDKINFLKNSAVNLFLLDAESCYLIGFRYIRQLAITLRNTIHQPSKDSRKPVQSWSYVHSLDFWARLLSQAAWLSREKGVASELQSLVYPLVQIALGVIMSSPSSQLFPMRFHIIRSLIYLSRHTGVFIPLAPSLFEVLDSSYVSRKAKASTLKPLDFDVELRASSSYLRTKVYQDGLIDQLLELLSEYYVLYATDISFPELVIPAIVRSKRFAKRSKNAKLNRGLLTLVNRLEQQSKFMTEKRNQQKFAPIDSDSVEQFAQTIDWQQTPLGIYVVTQRQTREEQRKLIRESVQQDQEHKEQMRQKKKQALKSDDIELDDLSEEEAEDIDE.

2 disordered regions span residues 15 to 122 (ALAK…LESY) and 667 to 707 (ESVQ…DIDE). 2 stretches are compositionally biased toward basic and acidic residues: residues 18–32 (KKNDKIKKKDTDKGI) and 40–52 (EGKDETLKRDVEK). Serine 112 is subject to Phosphoserine. Residues 659-700 (EEQRKLIRESVQQDQEHKEQMRQKKKQALKSDDIELDDLSEE) are a coiled coil. Over residues 692–707 (IELDDLSEEEAEDIDE) the composition is skewed to acidic residues.

This sequence belongs to the NOC2 family.

The protein resides in the nucleus. It localises to the nucleolus. This is an uncharacterized protein from Schizosaccharomyces pombe (strain 972 / ATCC 24843) (Fission yeast).